Reading from the N-terminus, the 786-residue chain is Mitochondrial intermediate peptidase (786 aa).

The N-terminal 29 residues, 1 to 29 (MSSILLRSYRHHAKVWTRPSSKSSFIRSL), are a transit peptide targeting the mitochondrion. Residue histidine 567 participates in Zn(2+) binding. Residue glutamate 568 is part of the active site. Zn(2+)-binding residues include histidine 571 and histidine 574.

Belongs to the peptidase M3 family. The cofactor is Zn(2+).

It is found in the mitochondrion matrix. It carries out the reaction Release of an N-terminal octapeptide as second stage of processing of some proteins imported into the mitochondrion.. Its function is as follows. Cleaves proteins, imported into the mitochondrion, to their mature size. While most mitochondrial precursor proteins are processed to the mature form in one step by mitochondrial processing peptidase (MPP), the sequential cleavage by MIP of an octapeptide after initial processing by MPP is a required step for a subgroup of nuclear-encoded precursor proteins destined for the matrix or the inner membrane. The polypeptide is Mitochondrial intermediate peptidase (OCT1) (Meyerozyma guilliermondii (strain ATCC 6260 / CBS 566 / DSM 6381 / JCM 1539 / NBRC 10279 / NRRL Y-324) (Yeast)).